A 321-amino-acid polypeptide reads, in one-letter code: Glucokinase (321 aa).

ATP is bound at residue 8 to 13; it reads GDVGGT.

The protein belongs to the bacterial glucokinase family.

It is found in the cytoplasm. It catalyses the reaction D-glucose + ATP = D-glucose 6-phosphate + ADP + H(+). The chain is Glucokinase from Psychromonas ingrahamii (strain DSM 17664 / CCUG 51855 / 37).